The following is a 199-amino-acid chain: Large ribosomal subunit protein bL25 (199 aa).

The protein belongs to the bacterial ribosomal protein bL25 family. CTC subfamily. Part of the 50S ribosomal subunit; part of the 5S rRNA/L5/L18/L25 subcomplex. Contacts the 5S rRNA. Binds to the 5S rRNA independently of L5 and L18.

This is one of the proteins that binds to the 5S RNA in the ribosome where it forms part of the central protuberance. In Syntrophobacter fumaroxidans (strain DSM 10017 / MPOB), this protein is Large ribosomal subunit protein bL25.